The sequence spans 294 residues: Equatorin (294 aa).

Residues 1–14 (MNFILFIFIPGVFS) form the signal peptide. Topologically, residues 15 to 181 (LKSSTLKPTI…QPDLEDLKIK (167 aa)) are vesicular. A glycan (N-linked (GlcNAc...) asparagine) is linked at N76. The interval 107-126 (KSTIEEETTTSEPSHKNIQR) is disordered. Residue N143 is glycosylated (N-linked (GlcNAc...) asparagine). The chain crosses the membrane as a helical span at residues 182–202 (IMLGISLMTLLLFVVLLAFCS). Residues 203 to 294 (ATLYKLRHLS…MHENDESVTR (92 aa)) lie on the Cytoplasmic side of the membrane.

In terms of assembly, interacts with SNAP25. Post-translationally, highly N- and O-glycosylated; contains sialic acid. In terms of tissue distribution, isoform 1 is highly expressed in testis. Isoform 2 is expressed at low levels in skin and blood.

It localises to the cytoplasmic vesicle. It is found in the secretory vesicle. The protein localises to the acrosome membrane. Its subcellular location is the acrosome inner membrane. The protein resides in the acrosome outer membrane. In terms of biological role, acrosomal membrane-anchored protein involved in the process of fertilization and in acrosome biogenesis. The sequence is that of Equatorin (EQTN) from Homo sapiens (Human).